The following is a 72-amino-acid chain: Translation initiation factor IF-1 (72 aa).

Residues 1-72 (MAKEETIQMQ…SRARITFRAK (72 aa)) enclose the S1-like domain.

It belongs to the IF-1 family. Component of the 30S ribosomal translation pre-initiation complex which assembles on the 30S ribosome in the order IF-2 and IF-3, IF-1 and N-formylmethionyl-tRNA(fMet); mRNA recruitment can occur at any time during PIC assembly.

The protein resides in the cytoplasm. In terms of biological role, one of the essential components for the initiation of protein synthesis. Stabilizes the binding of IF-2 and IF-3 on the 30S subunit to which N-formylmethionyl-tRNA(fMet) subsequently binds. Helps modulate mRNA selection, yielding the 30S pre-initiation complex (PIC). Upon addition of the 50S ribosomal subunit IF-1, IF-2 and IF-3 are released leaving the mature 70S translation initiation complex. In Nitrosospira multiformis (strain ATCC 25196 / NCIMB 11849 / C 71), this protein is Translation initiation factor IF-1.